Consider the following 347-residue polypeptide: Aromatic amino acid aminotransferase (347 aa).

Residue lysine 214 is modified to N6-(pyridoxal phosphate)lysine.

Belongs to the class-II pyridoxal-phosphate-dependent aminotransferase family. Homodimer. Pyridoxal 5'-phosphate is required as a cofactor.

The enzyme catalyses an aromatic L-alpha-amino acid + 2-oxoglutarate = an aromatic oxo-acid + L-glutamate. In terms of biological role, aminotransferase that catalyzes the conversion of aromatic amino acids and 2-oxoglutarate into corresponding aromatic oxo acids and L-glutamate. This Mycobacteroides abscessus (strain ATCC 19977 / DSM 44196 / CCUG 20993 / CIP 104536 / JCM 13569 / NCTC 13031 / TMC 1543 / L948) (Mycobacterium abscessus) protein is Aromatic amino acid aminotransferase.